Here is a 65-residue protein sequence, read N- to C-terminus: MIVPVRCFTCGKVIGDKYYEFKRRVEAGEDPEKVLDDLGLERYCCRRMLLSHVELIDDIMHYRVY.

Residues Cys-7, Cys-10, Cys-44, and Cys-45 each coordinate Zn(2+).

This sequence belongs to the archaeal Rpo10/eukaryotic RPB10 RNA polymerase subunit family. Part of the RNA polymerase complex. Requires Zn(2+) as cofactor.

The protein localises to the cytoplasm. It catalyses the reaction RNA(n) + a ribonucleoside 5'-triphosphate = RNA(n+1) + diphosphate. DNA-dependent RNA polymerase (RNAP) catalyzes the transcription of DNA into RNA using the four ribonucleoside triphosphates as substrates. This chain is DNA-directed RNA polymerase subunit Rpo10, found in Pyrococcus furiosus (strain ATCC 43587 / DSM 3638 / JCM 8422 / Vc1).